The following is a 26-amino-acid chain: Delta-hemolysin (26 aa).

At M1 the chain carries N-formylmethionine.

This sequence belongs to the delta-lysin family.

The protein localises to the secreted. The protein resides in the host cell membrane. Functionally, lyses erythrocytes and many other mammalian cells. The chain is Delta-hemolysin (hld) from Staphylococcus aureus (strain MSSA476).